The following is a 286-amino-acid chain: 4-hydroxybenzoate octaprenyltransferase (286 aa).

Transmembrane regions (helical) follow at residues 20–40 (IGTL…AGGM), 43–63 (LKVL…GCII), 95–115 (ILFA…NPLV), 142–162 (FLGV…TGEV), 167–187 (WWLF…YAMV), 210–230 (QIIG…GWAA), and 234–254 (LVYG…QKLI).

Belongs to the UbiA prenyltransferase family. The cofactor is Mg(2+).

It localises to the cell inner membrane. It catalyses the reaction all-trans-octaprenyl diphosphate + 4-hydroxybenzoate = 4-hydroxy-3-(all-trans-octaprenyl)benzoate + diphosphate. It participates in cofactor biosynthesis; ubiquinone biosynthesis. In terms of biological role, catalyzes the prenylation of para-hydroxybenzoate (PHB) with an all-trans polyprenyl group. Mediates the second step in the final reaction sequence of ubiquinone-8 (UQ-8) biosynthesis, which is the condensation of the polyisoprenoid side chain with PHB, generating the first membrane-bound Q intermediate 3-octaprenyl-4-hydroxybenzoate. In Shewanella sediminis (strain HAW-EB3), this protein is 4-hydroxybenzoate octaprenyltransferase.